Consider the following 518-residue polypeptide: GMP synthase [glutamine-hydrolyzing] (518 aa).

Positions 8–201 (TVLIIDFGSQ…VLKISNLKGN (194 aa)) constitute a Glutamine amidotransferase type-1 domain. Catalysis depends on C85, which acts as the Nucleophile. Catalysis depends on residues H175 and E177. In terms of domain architecture, GMPS ATP-PPase spans 202–393 (WSMASYREQT…LGLPEQFIGR (192 aa)). An ATP-binding site is contributed by 229–235 (SGGVDSS).

Homodimer.

The enzyme catalyses XMP + L-glutamine + ATP + H2O = GMP + L-glutamate + AMP + diphosphate + 2 H(+). It participates in purine metabolism; GMP biosynthesis; GMP from XMP (L-Gln route): step 1/1. Catalyzes the synthesis of GMP from XMP. The chain is GMP synthase [glutamine-hydrolyzing] from Bartonella henselae (strain ATCC 49882 / DSM 28221 / CCUG 30454 / Houston 1) (Rochalimaea henselae).